The sequence spans 285 residues: Pantothenate synthetase (285 aa).

Methionine 30 to histidine 37 contacts ATP. The active-site Proton donor is the histidine 37. (R)-pantoate is bound at residue glutamine 61. A beta-alanine-binding site is contributed by glutamine 61. Position 147 to 150 (glycine 147 to aspartate 150) interacts with ATP. Glutamine 153 lines the (R)-pantoate pocket. ATP-binding positions include valine 176 and leucine 184–arginine 187.

This sequence belongs to the pantothenate synthetase family. As to quaternary structure, homodimer.

The protein resides in the cytoplasm. It catalyses the reaction (R)-pantoate + beta-alanine + ATP = (R)-pantothenate + AMP + diphosphate + H(+). The protein operates within cofactor biosynthesis; (R)-pantothenate biosynthesis; (R)-pantothenate from (R)-pantoate and beta-alanine: step 1/1. Its function is as follows. Catalyzes the condensation of pantoate with beta-alanine in an ATP-dependent reaction via a pantoyl-adenylate intermediate. In Solidesulfovibrio magneticus (strain ATCC 700980 / DSM 13731 / RS-1) (Desulfovibrio magneticus), this protein is Pantothenate synthetase.